Here is a 202-residue protein sequence, read N- to C-terminus: Small ribosomal subunit protein uS4 (202 aa).

Positions 15 to 42 are disordered; that stretch reads LGDLPGLTRKAAKRSYPPGQHGQARRKR. One can recognise an S4 RNA-binding domain in the interval 90–152; that stretch reads SRLDNICFRL…KGSKQLAEGN (63 aa).

The protein belongs to the universal ribosomal protein uS4 family. As to quaternary structure, part of the 30S ribosomal subunit. Contacts protein S5. The interaction surface between S4 and S5 is involved in control of translational fidelity.

One of the primary rRNA binding proteins, it binds directly to 16S rRNA where it nucleates assembly of the body of the 30S subunit. Its function is as follows. With S5 and S12 plays an important role in translational accuracy. This chain is Small ribosomal subunit protein uS4, found in Synechococcus sp. (strain CC9902).